The primary structure comprises 118 residues: Small ribosomal subunit protein uS13 (118 aa).

Positions 91-118 are disordered; the sequence is HRRGLPVRGQRTKTNARTRKGPRKPIKK.

This sequence belongs to the universal ribosomal protein uS13 family. As to quaternary structure, part of the 30S ribosomal subunit. Forms a loose heterodimer with protein S19. Forms two bridges to the 50S subunit in the 70S ribosome.

In terms of biological role, located at the top of the head of the 30S subunit, it contacts several helices of the 16S rRNA. In the 70S ribosome it contacts the 23S rRNA (bridge B1a) and protein L5 of the 50S subunit (bridge B1b), connecting the 2 subunits; these bridges are implicated in subunit movement. Contacts the tRNAs in the A and P-sites. The sequence is that of Small ribosomal subunit protein uS13 from Photorhabdus laumondii subsp. laumondii (strain DSM 15139 / CIP 105565 / TT01) (Photorhabdus luminescens subsp. laumondii).